The chain runs to 185 residues: Ribosome-recycling factor (185 aa).

The protein belongs to the RRF family.

It is found in the cytoplasm. Responsible for the release of ribosomes from messenger RNA at the termination of protein biosynthesis. May increase the efficiency of translation by recycling ribosomes from one round of translation to another. This chain is Ribosome-recycling factor, found in Clostridium kluyveri (strain NBRC 12016).